The primary structure comprises 333 residues: Cilia- and flagella-associated protein 119 (333 aa).

A compositionally biased stretch (polar residues) spans 1 to 10; the sequence is MITPSSSQSL. Disordered regions lie at residues 1–70 and 309–333; these read MITP…ANLF and RLSS…TKTK. Phosphoserine is present on S34. Polar residues predominate over residues 44–58; it reads TDMQTESPAEATSSP. A coiled-coil region spans residues 284–319; the sequence is IKSQLSKELRQLQQLVEERLKESEERLSSKLAALEQ.

The protein resides in the cell projection. It localises to the cilium. It is found in the flagellum. The protein localises to the cytoplasmic vesicle. Its subcellular location is the secretory vesicle. The protein resides in the acrosome. It localises to the cytoplasm. The polypeptide is Cilia- and flagella-associated protein 119 (Mus musculus (Mouse)).